The chain runs to 162 residues: 2-C-methyl-D-erythritol 2,4-cyclodiphosphate synthase (162 aa).

Residues aspartate 8 and histidine 10 each contribute to the a divalent metal cation site. 4-CDP-2-C-methyl-D-erythritol 2-phosphate-binding positions include 8–10 (DVH) and 36–37 (HS). Histidine 44 contacts a divalent metal cation. 4-CDP-2-C-methyl-D-erythritol 2-phosphate-binding positions include 58–60 (DIG), 63–67 (FPDTD), 102–108 (AQAPKMA), 134–137 (TTTE), phenylalanine 141, and arginine 144.

This sequence belongs to the IspF family. In terms of assembly, homotrimer. The cofactor is a divalent metal cation.

It carries out the reaction 4-CDP-2-C-methyl-D-erythritol 2-phosphate = 2-C-methyl-D-erythritol 2,4-cyclic diphosphate + CMP. It participates in isoprenoid biosynthesis; isopentenyl diphosphate biosynthesis via DXP pathway; isopentenyl diphosphate from 1-deoxy-D-xylulose 5-phosphate: step 4/6. Its function is as follows. Involved in the biosynthesis of isopentenyl diphosphate (IPP) and dimethylallyl diphosphate (DMAPP), two major building blocks of isoprenoid compounds. Catalyzes the conversion of 4-diphosphocytidyl-2-C-methyl-D-erythritol 2-phosphate (CDP-ME2P) to 2-C-methyl-D-erythritol 2,4-cyclodiphosphate (ME-CPP) with a corresponding release of cytidine 5-monophosphate (CMP). This Yersinia pseudotuberculosis serotype IB (strain PB1/+) protein is 2-C-methyl-D-erythritol 2,4-cyclodiphosphate synthase.